A 256-amino-acid polypeptide reads, in one-letter code: MTLPASLKGFETLDIFNISSVRNICELNKHAEHVSIKNLPLIDISVGNDDVWFHLEDGTIVNGKSYKSICEKTLGFLGFIGIILLDSEDTLEEIRLSKTQCKRRIIYLILKEDTEFLLCGIVYALENLPIKGQTLLKLRDIIKKISVTLPVSKLLACTCQKLISILRYIFYDDKQQDVLDKVPPIIQLYYESKTANIHMLNLFFKSHDNDDTCTLSLNTRRLQDDSKYLIDFLKSAICDAFSKEYKMTEIEKTSLH.

Belongs to the herpesviridae cytoplasmic envelopment protein 1 family.

The protein localises to the virion. The protein resides in the virion tegument. Its subcellular location is the host cytoplasm. It is found in the host Golgi apparatus. Its function is as follows. Plays a critical role in cytoplasmic virus egress. Participates in the final step of tegumentation and envelope acquisition within the host cytoplasm. This chain is Cytoplasmic envelopment protein 1 (U75), found in Homo sapiens (Human).